The following is a 748-amino-acid chain: Catalase-peroxidase (748 aa).

Residues 1 to 16 (MSSDTSASRPPQPDTR) are compositionally biased toward polar residues. The disordered stretch occupies residues 1 to 43 (MSSDTSASRPPQPDTRTASKSESENPAIPSPHPKSNAPLTNRD). The segment at residues 113–238 (WHAAGTYRIH…YGATTMGLIY (126 aa)) is a cross-link (tryptophyl-tyrosyl-methioninium (Trp-Tyr) (with M-264)). Catalysis depends on His-114, which acts as the Proton acceptor. The segment at residues 238–264 (YVNPEGPEGKPDPIAAAIDIRETFGRM) is a cross-link (tryptophyl-tyrosyl-methioninium (Tyr-Met) (with W-113)). Residue His-279 coordinates heme b.

This sequence belongs to the peroxidase family. Peroxidase/catalase subfamily. As to quaternary structure, homodimer or homotetramer. It depends on heme b as a cofactor. Formation of the three residue Trp-Tyr-Met cross-link is important for the catalase, but not the peroxidase activity of the enzyme.

The catalysed reaction is H2O2 + AH2 = A + 2 H2O. The enzyme catalyses 2 H2O2 = O2 + 2 H2O. Its function is as follows. Bifunctional enzyme with both catalase and broad-spectrum peroxidase activity. This Mycolicibacterium paratuberculosis (strain ATCC BAA-968 / K-10) (Mycobacterium paratuberculosis) protein is Catalase-peroxidase.